The primary structure comprises 226 residues: ATP-dependent dethiobiotin synthetase BioD (226 aa).

Position 12-17 (12-17 (GVGKTV)) interacts with ATP. Mg(2+) is bound at residue Thr-16. Lys-37 is a catalytic residue. Thr-41 serves as a coordination point for substrate. ATP is bound by residues Asp-49, 108 to 111 (EGAG), 169 to 170 (GS), and 197 to 199 (PAG). Asp-49 and Glu-108 together coordinate Mg(2+).

Belongs to the dethiobiotin synthetase family. Homodimer. Requires Mg(2+) as cofactor.

The protein localises to the cytoplasm. It catalyses the reaction (7R,8S)-7,8-diammoniononanoate + CO2 + ATP = (4R,5S)-dethiobiotin + ADP + phosphate + 3 H(+). It functions in the pathway cofactor biosynthesis; biotin biosynthesis; biotin from 7,8-diaminononanoate: step 1/2. Its function is as follows. Catalyzes a mechanistically unusual reaction, the ATP-dependent insertion of CO2 between the N7 and N8 nitrogen atoms of 7,8-diaminopelargonic acid (DAPA, also called 7,8-diammoniononanoate) to form a ureido ring. The polypeptide is ATP-dependent dethiobiotin synthetase BioD (Mycobacterium bovis (strain BCG / Pasteur 1173P2)).